The chain runs to 532 residues: Eukaryotic translation initiation factor 3 subunit D (532 aa).

A disordered region spans residues 108–161 (ATVLKTRGGAPRGGSFAGRGGSQRGGRFQNQPGRGPVGGQRGPNPRFGKSKFGW). A compositionally biased stretch (gly residues) spans 117–131 (APRGGSFAGRGGSQR). Low complexity predominate over residues 132–141 (GGRFQNQPGR). Positions 296 to 310 (PLDFITVDENAADPP) are RNA gate.

The protein belongs to the eIF-3 subunit D family. In terms of assembly, component of the eukaryotic translation initiation factor 3 (eIF-3) complex.

The protein localises to the cytoplasm. In terms of biological role, mRNA cap-binding component of the eukaryotic translation initiation factor 3 (eIF-3) complex, which is involved in protein synthesis of a specialized repertoire of mRNAs and, together with other initiation factors, stimulates binding of mRNA and methionyl-tRNAi to the 40S ribosome. The eIF-3 complex specifically targets and initiates translation of a subset of mRNAs involved in cell proliferation. In the eIF-3 complex, eif3d specifically recognizes and binds the 7-methylguanosine cap of a subset of mRNAs. This Yarrowia lipolytica (strain CLIB 122 / E 150) (Yeast) protein is Eukaryotic translation initiation factor 3 subunit D.